A 243-amino-acid polypeptide reads, in one-letter code: GTP cyclohydrolase 1 (243 aa).

Thr-15 bears the Phosphothreonine mark. The tract at residues 18–55 (NIRPTSPYTLNPPVERDGFSWPSVGTRQRAEETEEEEK) is disordered. Ser-23 is modified (phosphoserine). 3 residues coordinate Zn(2+): Cys-132, His-135, and Cys-203.

The protein belongs to the GTP cyclohydrolase I family. Homodimer.

It carries out the reaction GTP + H2O = 7,8-dihydroneopterin 3'-triphosphate + formate + H(+). The protein operates within cofactor biosynthesis; 7,8-dihydroneopterin triphosphate biosynthesis; 7,8-dihydroneopterin triphosphate from GTP: step 1/1. In terms of biological role, GTP cyclohydrolase 1 is the first enzyme in the biosynthetic pathway leading to folic acid. In Saccharomyces cerevisiae (strain ATCC 204508 / S288c) (Baker's yeast), this protein is GTP cyclohydrolase 1.